We begin with the raw amino-acid sequence, 88 residues long: Large ribosomal subunit protein bL27 (88 aa).

The disordered stretch occupies residues 1–20 (MASKKGVGSTKDGRDSIAKR).

Belongs to the bacterial ribosomal protein bL27 family.

The chain is Large ribosomal subunit protein bL27 (rpmA) from Geobacillus stearothermophilus (Bacillus stearothermophilus).